We begin with the raw amino-acid sequence, 424 residues long: Enolase (424 aa).

Gln162 lines the (2R)-2-phosphoglycerate pocket. The active-site Proton donor is the Glu204. Mg(2+)-binding residues include Asp241, Glu284, and Asp311. (2R)-2-phosphoglycerate contacts are provided by Lys336, Arg365, Ser366, and Lys387. Catalysis depends on Lys336, which acts as the Proton acceptor.

This sequence belongs to the enolase family. It depends on Mg(2+) as a cofactor.

It is found in the cytoplasm. It localises to the secreted. Its subcellular location is the cell surface. It carries out the reaction (2R)-2-phosphoglycerate = phosphoenolpyruvate + H2O. It functions in the pathway carbohydrate degradation; glycolysis; pyruvate from D-glyceraldehyde 3-phosphate: step 4/5. Catalyzes the reversible conversion of 2-phosphoglycerate (2-PG) into phosphoenolpyruvate (PEP). It is essential for the degradation of carbohydrates via glycolysis. The chain is Enolase from Sinorhizobium fredii (strain NBRC 101917 / NGR234).